The chain runs to 299 residues: Coenzyme PQQ synthesis protein B (299 aa).

The protein belongs to the PqqB family.

The protein operates within cofactor biosynthesis; pyrroloquinoline quinone biosynthesis. In terms of biological role, may be involved in the transport of PQQ or its precursor to the periplasm. This Methylorubrum extorquens (strain PA1) (Methylobacterium extorquens) protein is Coenzyme PQQ synthesis protein B.